The following is a 191-amino-acid chain: Signal peptidase IB (191 aa).

At 1 to 7 (MKKELLE) the chain is on the cytoplasmic side. The chain crosses the membrane as a helical span at residues 8-28 (WIISIAVAFVILFIVGKFIVT). Over 29-191 (PYTIKGESMD…HNFNPENTKN (163 aa)) the chain is Extracellular. Catalysis depends on residues S36 and K77.

Belongs to the peptidase S26 family.

Its subcellular location is the cell membrane. The enzyme catalyses Cleavage of hydrophobic, N-terminal signal or leader sequences from secreted and periplasmic proteins.. In terms of biological role, essential for cell viability. The polypeptide is Signal peptidase IB (spsB) (Staphylococcus aureus (strain Mu50 / ATCC 700699)).